The primary structure comprises 227 residues: uncharacterized protein (227 aa).

This is an uncharacterized protein from Caenorhabditis elegans.